Consider the following 79-residue polypeptide: Methionine-rich peptide X (79 aa).

A signal peptide spans 1–22 (MKKLAAVMLTSCLMVAVGASFA). Residues 37–79 (KKDDMAKDEMKKDSMAKDGMKKDAMKKDAMMKKDGMTKDEMKK) form a disordered region.

Post-translationally, protein is oxidized (possibly on Met residues) when cells are exposed to chlorite or hypochlorite; initially the protein is highly oxidized, by 50 minutes all protein is in the reduced form.

Its subcellular location is the periplasm. In terms of biological role, serves as an oxidative stress sink, specifically for chlorite and hypochlorite. The chain is Methionine-rich peptide X from Azospira oryzae (strain ATCC BAA-33 / DSM 13638 / PS) (Dechlorosoma suillum).